The primary structure comprises 332 residues: Phosphate acyltransferase (332 aa).

Belongs to the PlsX family. Homodimer. Probably interacts with PlsY.

The protein localises to the cytoplasm. It catalyses the reaction a fatty acyl-[ACP] + phosphate = an acyl phosphate + holo-[ACP]. Its pathway is lipid metabolism; phospholipid metabolism. Its function is as follows. Catalyzes the reversible formation of acyl-phosphate (acyl-PO(4)) from acyl-[acyl-carrier-protein] (acyl-ACP). This enzyme utilizes acyl-ACP as fatty acyl donor, but not acyl-CoA. The sequence is that of Phosphate acyltransferase from Streptococcus mutans serotype c (strain ATCC 700610 / UA159).